A 72-amino-acid polypeptide reads, in one-letter code: Prokaryotic ubiquitin-like protein Pup (72 aa).

Residues methionine 1 to glutamine 10 show a composition bias toward gly residues. A disordered region spans residues methionine 1–serine 41. Residues glutamate 21–glutamate 61 are a coiled coil. Residues asparagine 28–tyrosine 66 form an ARC ATPase binding region. The segment covering serine 31–serine 41 has biased composition (basic and acidic residues). An Isoglutamyl lysine isopeptide (Glu-Lys) (interchain with K-? in acceptor proteins) cross-link involves residue glutamate 72.

Belongs to the prokaryotic ubiquitin-like protein family. In terms of assembly, strongly interacts with the proteasome-associated ATPase ARC through a hydrophobic interface; the interacting region of Pup lies in its C-terminal half. There is one Pup binding site per ARC hexamer ring.

The protein operates within protein degradation; proteasomal Pup-dependent pathway. Its function is as follows. Protein modifier that is covalently attached to lysine residues of substrate proteins, thereby targeting them for proteasomal degradation. The tagging system is termed pupylation. This chain is Prokaryotic ubiquitin-like protein Pup, found in Frankia alni (strain DSM 45986 / CECT 9034 / ACN14a).